The primary structure comprises 1997 residues: Nucleoprotein TPR (1997 aa).

Coiled-coil stretches lie at residues 1–36, 101–277, 335–1103, and 1129–1305; these read QEQH…NDLL, EIVK…HQMT, DSTE…IKTI, and AEAS…EPQE. Composition is skewed to basic and acidic residues over residues 672-702 and 1290-1305; these read SSEY…KTVE and REQQ…EPQE. Disordered regions lie at residues 672-706, 1290-1352, 1438-1529, 1561-1752, 1795-1832, and 1870-1997; these read SSEY…QMEQ, REQQ…AAVP, AFVQ…KTET, IQTS…RRQS, AIHS…ASQG, and ENPA…RSNI. Composition is skewed to polar residues over residues 1306–1321, 1328–1347, and 1446–1487; these read TTRI…QPTT, SANT…SKVT, and SHAT…SSSI. The span at 1511 to 1529 shows a compositional bias: basic and acidic residues; it reads DQQRTKKRKEEDIEEKTET. Positions 1561–1587 are enriched in polar residues; it reads IQTSQVIESQAPEQLQNVQSTQDSLQD. 2 stretches are compositionally biased toward acidic residues: residues 1601 to 1637 and 1644 to 1667; these read SDEE…DSNE and GNED…ETED. Polar residues-rich tracts occupy residues 1692-1709, 1817-1830, and 1879-1899; these read AEST…SASD, QASS…QLAS, and HASQ…TSVD. The segment covering 1902-1915 has biased composition (acidic residues); it reads AADEGDEVFVEAES. Residues 1950–1959 show a composition bias toward low complexity; sequence SSSIADTSSS.

It belongs to the TPR family. Homodimer. Part of the nuclear pore complex (NPC). Interacts with nuclear receptor KPNB1; the interaction occurs in a RanGTP-dependent manner. Associates with the Importin alpha/Importin beta receptor. Expressed in epithelial cells, oocytes and egg (at protein level).

Its subcellular location is the nucleus. It localises to the nucleus membrane. The protein localises to the nucleus envelope. It is found in the nuclear pore complex. The protein resides in the cytoplasm. Its subcellular location is the cytoskeleton. It localises to the spindle. The protein localises to the chromosome. It is found in the centromere. The protein resides in the kinetochore. In terms of biological role, component of the nuclear pore complex (NPC), a complex required for the trafficking across the nuclear envelope. Functions as a scaffolding element in the nuclear phase of the NPC essential for normal nucleocytoplasmic transport of proteins and mRNAs, plays a role in the establishment of nuclear-peripheral chromatin compartmentalization in interphase, and in the mitotic spindle checkpoint signaling during mitosis. Involved in the quality control and retention of unspliced mRNAs in the nucleus. Implicated in nuclear export of mRNAs transcribed from heat shock gene promoters. May play a limited role in the regulation of nuclear protein export. May be involved in the formation and/or maintenance of NPC-associated perinuclear heterochromatin exclusion zones (HEZs). Finally, may act as a spatial regulator of the spindle-assembly checkpoint (SAC) response. This Xenopus laevis (African clawed frog) protein is Nucleoprotein TPR.